The sequence spans 420 residues: Serine hydroxymethyltransferase (420 aa).

Residues Leu-121 and 125–127 contribute to the (6S)-5,6,7,8-tetrahydrofolate site; that span reads GHL. N6-(pyridoxal phosphate)lysine is present on Lys-230. (6S)-5,6,7,8-tetrahydrofolate is bound at residue 355 to 357; the sequence is SPF.

This sequence belongs to the SHMT family. As to quaternary structure, homodimer. Pyridoxal 5'-phosphate serves as cofactor.

Its subcellular location is the cytoplasm. It carries out the reaction (6R)-5,10-methylene-5,6,7,8-tetrahydrofolate + glycine + H2O = (6S)-5,6,7,8-tetrahydrofolate + L-serine. Its pathway is one-carbon metabolism; tetrahydrofolate interconversion. It participates in amino-acid biosynthesis; glycine biosynthesis; glycine from L-serine: step 1/1. Catalyzes the reversible interconversion of serine and glycine with tetrahydrofolate (THF) serving as the one-carbon carrier. This reaction serves as the major source of one-carbon groups required for the biosynthesis of purines, thymidylate, methionine, and other important biomolecules. Also exhibits THF-independent aldolase activity toward beta-hydroxyamino acids, producing glycine and aldehydes, via a retro-aldol mechanism. The sequence is that of Serine hydroxymethyltransferase from Streptococcus mutans serotype c (strain ATCC 700610 / UA159).